A 196-amino-acid chain; its full sequence is Small ribosomal subunit protein uS4c (196 aa).

Positions 15–41 (LGALPGLTSKRPRSGSDLKNPLRSGKR) are disordered. Positions 89 to 150 (MRLDNILFRL…KQRSKALIQN (62 aa)) constitute an S4 RNA-binding domain.

This sequence belongs to the universal ribosomal protein uS4 family. Part of the 30S ribosomal subunit. Contacts protein S5. The interaction surface between S4 and S5 is involved in control of translational fidelity.

The protein resides in the plastid. The protein localises to the chloroplast. In terms of biological role, one of the primary rRNA binding proteins, it binds directly to 16S rRNA where it nucleates assembly of the body of the 30S subunit. With S5 and S12 plays an important role in translational accuracy. The chain is Small ribosomal subunit protein uS4c (rps4) from Narcissus odorus (Campernelle jonquil).